Reading from the N-terminus, the 491-residue chain is Cobyric acid synthase (491 aa).

Positions 250 to 441 (DLQITVVRLP…LHGLFDNGPW (192 aa)) constitute a GATase cobBQ-type domain. Residue Cys-331 is the Nucleophile of the active site. His-433 is an active-site residue.

Belongs to the CobB/CobQ family. CobQ subfamily.

The protein operates within cofactor biosynthesis; adenosylcobalamin biosynthesis. Catalyzes amidations at positions B, D, E, and G on adenosylcobyrinic A,C-diamide. NH(2) groups are provided by glutamine, and one molecule of ATP is hydrogenolyzed for each amidation. The sequence is that of Cobyric acid synthase from Trichormus variabilis (strain ATCC 29413 / PCC 7937) (Anabaena variabilis).